Reading from the N-terminus, the 259-residue chain is Keratin-associated protein 10-8 (259 aa).

Positions 26-243 are 19 X 5 AA repeats of C-C-X(3); it reads HVSRVSSPST…SCQPSCCHPA (218 aa). Tandem repeats lie at residues 50 to 54, 60 to 64, 65 to 69, 98 to 102, 108 to 112, 118 to 122, 123 to 127, 133 to 137, 145 to 149, 155 to 159, 165 to 169, 170 to 174, 175 to 179, 187 to 191, 197 to 201, 202 to 206, 221 to 225, 228 to 232, and 239 to 243.

The protein belongs to the KRTAP type 10 family. In terms of assembly, interacts with hair keratins. In terms of tissue distribution, restricted to a narrow region of the hair fiber cuticle, lying approximately 20 cell layers above the apex of the dermal papilla of the hair root; not detected in any other tissues.

In the hair cortex, hair keratin intermediate filaments are embedded in an interfilamentous matrix, consisting of hair keratin-associated proteins (KRTAP), which are essential for the formation of a rigid and resistant hair shaft through their extensive disulfide bond cross-linking with abundant cysteine residues of hair keratins. The matrix proteins include the high-sulfur and high-glycine-tyrosine keratins. In Homo sapiens (Human), this protein is Keratin-associated protein 10-8 (KRTAP10-8).